A 274-amino-acid polypeptide reads, in one-letter code: Protein STAY-GREEN, chloroplastic (274 aa).

The N-terminal 48 residues, 1–48, are a transit peptide targeting the chloroplast; sequence MAAATSTMSLIPPITQQQRWHAADSLVVLASRRHDSRRRRRCRYVVPR.

This sequence belongs to the staygreen family.

It is found in the plastid. It localises to the chloroplast. Its function is as follows. Involved in the disassembling mechanism of the intact light-harvesting complex of photosystem II (LHCPII) in the thylakoid membranes. Required to trigger chlorophyll degradation during natural and dark-induced leaf senescence. The protein is Protein STAY-GREEN, chloroplastic (SGR) of Oryza sativa subsp. indica (Rice).